The following is a 353-amino-acid chain: Vomeronasal type-1 receptor 1 (353 aa).

The Extracellular portion of the chain corresponds to 1–56 (MVGDTLKLLSPLMTRYFFLLFYSTDSSDLNENQHPLDFDEMAFGKVKSGISFLIQT). Residues 57-77 (GVGILGNSFLLCFYNLILFTG) traverse the membrane as a helical segment. Over 78–84 (HKLRPTD) the chain is Cytoplasmic. The helical transmembrane segment at 85–105 (LILSHLALANSMVLFFKGIPQ) threads the bilayer. At 106 to 132 (TMAAFGLKYLLNDTGCKFVFYYHRVGT) the chain is on the extracellular side. N-linked (GlcNAc...) asparagine glycosylation occurs at Asn-117. Residues 133–153 (RVSLSTICLLNGFQAIKLNPS) traverse the membrane as a helical segment. Residues 154-169 (ICRWMEIKIRSPRFID) lie on the Cytoplasmic side of the membrane. A helical membrane pass occupies residues 170–190 (FCCLLCWVPHVLMNASVLLLV). The Extracellular segment spans residues 191–226 (NGPLNSKNSSAKNNYGYCSYKASKRFSSLHAVLYFS). Asn-198 is a glycosylation site (N-linked (GlcNAc...) asparagine). A helical transmembrane segment spans residues 227 to 247 (PDFMSLGFMVWASGSMVFFLY). Residues 248–274 (RHKQQVQHNHSNRLSCRPSQETRATRT) lie on the Cytoplasmic side of the membrane. The chain crosses the membrane as a helical span at residues 275-295 (IMVLVSSFFVFYSVHSFLTIW). Residues 296–303 (TTVVANPG) lie on the Extracellular side of the membrane. A helical membrane pass occupies residues 304–324 (QWIVNNSVLVASYFPSRSPFV). Residues 325 to 353 (LIMSDTRISQFCFACRTRKTLFPNLVVMP) are Cytoplasmic-facing.

It belongs to the G-protein coupled receptor 1 family.

The protein localises to the cell membrane. Functionally, putative pheromone receptor. The sequence is that of Vomeronasal type-1 receptor 1 (VN1R1) from Gorilla gorilla gorilla (Western lowland gorilla).